Consider the following 88-residue polypeptide: Electron transfer flavoprotein regulatory factor 1 (88 aa).

The protein belongs to the complex I LYR family. In terms of assembly, homotetramer. Interacts with NDUFAB1. Interacts with ETFA. Interacts with ETFB.

Its subcellular location is the mitochondrion. Functionally, acts as a regulator of the electron transfer flavoprotein by promoting the removal of flavin from the ETF holoenzyme (composed of ETFA and ETFB). The chain is Electron transfer flavoprotein regulatory factor 1 from Bos taurus (Bovine).